The sequence spans 273 residues: Medium-wave-sensitive opsin 1 (273 aa).

The Extracellular portion of the chain corresponds to 1–5; sequence APRWV. Residues 6-30 form a helical membrane-spanning segment; the sequence is YHLTSAWMVFVVIASVFTNGLVLAA. Residues 31 to 42 lie on the Cytoplasmic side of the membrane; the sequence is TMRFKKLRHPLN. The chain crosses the membrane as a helical span at residues 43 to 68; the sequence is WILVNLAIADLVETIIASTISVVNQM. The Extracellular segment spans residues 69-82; it reads YGYFVLGHPLCVVE. A disulfide bridge connects residues cysteine 79 and cysteine 156. The helical transmembrane segment at 83–102 threads the bilayer; it reads GYTASLCGITGLWSLAIISW. Over 103–121 the chain is Cytoplasmic; sequence ERWMVVCRPFGNVRFDAKL. Residues 122 to 145 traverse the membrane as a helical segment; it reads AIAGIAFSWIWAAVWTAPPIFGWS. The Extracellular portion of the chain corresponds to 146–171; it reads RYWPHGLKTSCGPDVFSGSSYPGVQS. A helical membrane pass occupies residues 172-199; it reads YMIVLMITCCFIPLSVIVLCYLQVWLAI. At 200 to 221 the chain is on the cytoplasmic side; the sequence is RAVAKQQKESESTQKAEKEVTR. The chain crosses the membrane as a helical span at residues 222-245; the sequence is MVMVMIFAFCLCWGPYAFFACFAA. Over 246–253 the chain is Extracellular; sequence AHPGYAFH. A helical membrane pass occupies residues 254–273; that stretch reads PLVAALPAYFAKSATIYNPI. Residue lysine 265 is modified to N6-(retinylidene)lysine.

Belongs to the G-protein coupled receptor 1 family. Opsin subfamily. Monomer. Homodimer. Homotetramer. In terms of processing, O-glycosylated. Post-translationally, phosphorylated on some or all of the serine and threonine residues present in the C-terminal region. As to expression, the three color pigments are found in the cone photoreceptor cells.

The protein localises to the membrane. In terms of biological role, visual pigments are the light-absorbing molecules that mediate vision. They consist of an apoprotein, opsin, covalently linked to cis-retinal. This chain is Medium-wave-sensitive opsin 1 (OPN1MW), found in Odocoileus virginianus virginianus (Virginia white-tailed deer).